Here is a 319-residue protein sequence, read N- to C-terminus: Cell division protein FtsN (319 aa).

The tract at residues M1–P30 is disordered. At M1–S33 the chain is on the cytoplasmic side. The interval R4 to Y6 is mediates interaction with FtsA. Basic residues predominate over residues S15–R27. The helical transmembrane segment at P34–I54 threads the bilayer. Topologically, residues T55–G319 are periplasmic. Disordered stretches follow at residues E60–P79 and L89–Q113. Repeat copies occupy residues T115–Q120, T145–Q150, Q197–P200, and Q220–P223. Positions T115–Q150 are 2 X 6 AA repeats. The segment at P140–E245 is disordered. The span at E143–Q171 shows a compositional bias: low complexity. A compositionally biased stretch (polar residues) spans S172–S221. A 2 X 4 AA repeats region spans residues Q197–P223. Residues K222–P238 show a composition bias toward low complexity. The SPOR domain maps to K242–A316. Residues C252 and C312 are joined by a disulfide bond.

The protein belongs to the FtsN family. Interacts with FtsA via its N-terminal cytoplasmic domain. Interacts with ZapA, FtsQ, FtsW and FtsI.

Its subcellular location is the cell inner membrane. Its function is as follows. Essential cell division protein that activates septal peptidoglycan synthesis and constriction of the cell. Acts on both sides of the membrane, via interaction with FtsA in the cytoplasm and interaction with the FtsQBL complex in the periplasm. These interactions may induce a conformational switch in both FtsA and FtsQBL, leading to septal peptidoglycan synthesis by FtsI and associated synthases. Required for full FtsI activity. Required for recruitment of AmiC to the septal ring. This Escherichia coli (strain K12) protein is Cell division protein FtsN.